The sequence spans 43 residues: Cytochrome b559 subunit beta (43 aa).

A helical membrane pass occupies residues tryptophan 18–glycine 34. Histidine 22 lines the heme pocket.

Belongs to the PsbE/PsbF family. In terms of assembly, heterodimer of an alpha subunit and a beta subunit. PSII is composed of 1 copy each of membrane proteins PsbA, PsbB, PsbC, PsbD, PsbE, PsbF, PsbH, PsbI, PsbJ, PsbK, PsbL, PsbM, PsbT, PsbX, PsbY, PsbZ, Psb30/Ycf12, at least 3 peripheral proteins of the oxygen-evolving complex and a large number of cofactors. It forms dimeric complexes. The cofactor is heme b.

The protein resides in the plastid. It localises to the chloroplast thylakoid membrane. Functionally, this b-type cytochrome is tightly associated with the reaction center of photosystem II (PSII). PSII is a light-driven water:plastoquinone oxidoreductase that uses light energy to abstract electrons from H(2)O, generating O(2) and a proton gradient subsequently used for ATP formation. It consists of a core antenna complex that captures photons, and an electron transfer chain that converts photonic excitation into a charge separation. The chain is Cytochrome b559 subunit beta from Trieres chinensis (Marine centric diatom).